Consider the following 347-residue polypeptide: Druantia protein DruD (347 aa).

It localises to the cytoplasm. Component of antiviral defense system Druantia type I, composed of DruA, DruB, DruC, DruD and DruE. Expression of Druantia in E.coli (strain MG1655) confers resistance to phage lambda, SECphi18, SECphi27 and T4. This Escherichia coli (strain UMEA 4076-1) protein is Druantia protein DruD.